Reading from the N-terminus, the 172-residue chain is C-phycocyanin beta chain (172 aa).

The residue at position 72 (Asn72) is an N4-methylasparagine. Positions 82 and 153 each coordinate (2R,3E)-phycocyanobilin.

Belongs to the phycobiliprotein family. As to quaternary structure, heterodimer of an alpha and a beta subunit, which further assembles into trimers and the trimers into hexamers. The basic functional unit of phycobiliproteins is a ring-shaped hexamer formed from two back-to-back trimers contacting via the alpha chain subunits. The trimers are composed of alpha/beta subunit heterodimers arranged around a three-fold axis of symmetry. The phycoerythrins also contain a gamma subunit which is located in the center of the hexamer. Post-translationally, contains two covalently linked bilin chromophores.

It is found in the plastid. Its subcellular location is the chloroplast thylakoid membrane. Light-harvesting photosynthetic bile pigment-protein from the phycobiliprotein complex (phycobilisome, PBS). Phycocyanin is the major phycobiliprotein in the PBS rod. This chain is C-phycocyanin beta chain (cpcB), found in Aglaothamnion neglectum (Red alga).